We begin with the raw amino-acid sequence, 359 residues long: MQERVKTKKIFVGDVAIGGDAPISVQSMTFSKTADIGATKAQIDRLALAGCDIVRVAVSDHEDANALKELKRLSPLPLVADIHFRYKLALIAAQSVDCIRINPGNIGSKEKIKAVADACAERGIPIRIGVNGGSLEEMFEQKYGATPRGMVESALYNIKLLEDFGFANIKVSLKASDVERTVLAYRELRPLVEYPFHLGVTEAGTLFHSMIKSSMALGGLLLEGIGDTMRVSITGELEQEVEVARAILKYSGRQKEGVYLISCPTCGRIEADLVSAVKRVEERVKHIRAPLQISVMGCAVNALGEAKHADIAIAFGRGDGLIIKKGEILCKLPEEELVDRLVEEAEKLEREYLEDSFKN.

4 residues coordinate [4Fe-4S] cluster: Cys263, Cys266, Cys298, and Glu305.

This sequence belongs to the IspG family. Requires [4Fe-4S] cluster as cofactor.

The catalysed reaction is (2E)-4-hydroxy-3-methylbut-2-enyl diphosphate + oxidized [flavodoxin] + H2O + 2 H(+) = 2-C-methyl-D-erythritol 2,4-cyclic diphosphate + reduced [flavodoxin]. The protein operates within isoprenoid biosynthesis; isopentenyl diphosphate biosynthesis via DXP pathway; isopentenyl diphosphate from 1-deoxy-D-xylulose 5-phosphate: step 5/6. Converts 2C-methyl-D-erythritol 2,4-cyclodiphosphate (ME-2,4cPP) into 1-hydroxy-2-methyl-2-(E)-butenyl 4-diphosphate. This is 4-hydroxy-3-methylbut-2-en-1-yl diphosphate synthase (flavodoxin) from Wolinella succinogenes (strain ATCC 29543 / DSM 1740 / CCUG 13145 / JCM 31913 / LMG 7466 / NCTC 11488 / FDC 602W) (Vibrio succinogenes).